Reading from the N-terminus, the 114-residue chain is Large ribosomal subunit protein uL18 (114 aa).

It belongs to the universal ribosomal protein uL18 family. In terms of assembly, part of the 50S ribosomal subunit; part of the 5S rRNA/L5/L18/L25 subcomplex. Contacts the 5S and 23S rRNAs.

This is one of the proteins that bind and probably mediate the attachment of the 5S RNA into the large ribosomal subunit, where it forms part of the central protuberance. This Bacteroides thetaiotaomicron (strain ATCC 29148 / DSM 2079 / JCM 5827 / CCUG 10774 / NCTC 10582 / VPI-5482 / E50) protein is Large ribosomal subunit protein uL18.